Consider the following 461-residue polypeptide: Epidermin leader peptide-processing serine protease EpiP (461 aa).

A signal peptide spans 1 to 23; the sequence is MNKFKFFIVFLILSLVFLQNEYA. Residues 121 to 459 form the Peptidase S8 domain; that stretch reads QWDMRKITNE…NGKLDVYKLL (339 aa). Catalysis depends on charge relay system residues Asp149, His194, and Ser402.

It belongs to the peptidase S8 family.

Its pathway is antibiotic biosynthesis; epidermin biosynthesis. In terms of biological role, protease which cleaves the matured lantibiotic from the modified prepeptide. The polypeptide is Epidermin leader peptide-processing serine protease EpiP (epiP) (Staphylococcus epidermidis).